Consider the following 385-residue polypeptide: Putative 8-amino-7-oxononanoate synthase (385 aa).

Position 21 (Arg-21) interacts with substrate. 108–109 (GY) contacts pyridoxal 5'-phosphate. Position 133 (His-133) interacts with substrate. Residues Ser-182, 207–210 (DEAH), and 234–237 (TFGK) each bind pyridoxal 5'-phosphate. Lys-237 bears the N6-(pyridoxal phosphate)lysine mark. Residue Ser-351 coordinates substrate.

The protein belongs to the class-II pyridoxal-phosphate-dependent aminotransferase family. BioF subfamily. As to quaternary structure, homodimer. It depends on pyridoxal 5'-phosphate as a cofactor.

It carries out the reaction 6-carboxyhexanoyl-[ACP] + L-alanine + H(+) = (8S)-8-amino-7-oxononanoate + holo-[ACP] + CO2. Its pathway is cofactor biosynthesis; biotin biosynthesis. Functionally, catalyzes the decarboxylative condensation of pimeloyl-[acyl-carrier protein] and L-alanine to produce 8-amino-7-oxononanoate (AON), [acyl-carrier protein], and carbon dioxide. This Desulfosudis oleivorans (strain DSM 6200 / JCM 39069 / Hxd3) (Desulfococcus oleovorans) protein is Putative 8-amino-7-oxononanoate synthase (bioF).